A 130-amino-acid chain; its full sequence is Small ribosomal subunit protein uS9 (130 aa).

This sequence belongs to the universal ribosomal protein uS9 family.

The protein is Small ribosomal subunit protein uS9 of Serratia proteamaculans (strain 568).